A 683-amino-acid chain; its full sequence is DNA ligase (683 aa).

NAD(+) contacts are provided by residues 44 to 48 (DAEYD), 93 to 94 (SL), and Glu127. Lys129 acts as the N6-AMP-lysine intermediate in catalysis. Residues Arg150, Glu187, Lys302, and Lys326 each coordinate NAD(+). The Zn(2+) site is built by Cys420, Cys423, Cys438, and Cys444. Residues 601–683 (RVGGRLAGLT…SKLLATGGNQ (83 aa)) enclose the BRCT domain.

It belongs to the NAD-dependent DNA ligase family. LigA subfamily. Requires Mg(2+) as cofactor. The cofactor is Mn(2+).

The enzyme catalyses NAD(+) + (deoxyribonucleotide)n-3'-hydroxyl + 5'-phospho-(deoxyribonucleotide)m = (deoxyribonucleotide)n+m + AMP + beta-nicotinamide D-nucleotide.. Its function is as follows. DNA ligase that catalyzes the formation of phosphodiester linkages between 5'-phosphoryl and 3'-hydroxyl groups in double-stranded DNA using NAD as a coenzyme and as the energy source for the reaction. It is essential for DNA replication and repair of damaged DNA. This Trichlorobacter lovleyi (strain ATCC BAA-1151 / DSM 17278 / SZ) (Geobacter lovleyi) protein is DNA ligase.